Consider the following 637-residue polypeptide: MQTNKGSLLWENLRVDLEPWLKDAIRSLNYPTMTPVQASTIPLLSGNKDVIVEAVTGSGKTLAFAIPVLQKVSKRLYQVPEGEEKPEPVKRGHMLAIVMAPTRELAKQIQMVFDKVLELLPEEDSYEPRIKTQLLVGFLGNVREDLDSYQENRPQILIATPGRLLDFMSLQIVKTSSLEIVILDEADKLLDMSFETDVIKILKMLPKQRRTGLFSATISAAGDTIFRTGMNNPVKLQVKTKNFLGEQNNAPTSLQLSYMMIEPEHKLTTMLQMLRDNQFKKAIVYFPTCTSVKHFYQMLSKLCKSSANDIDISALLFFSLHGQLTTKSRLNTLEKFTEGNDESKKYILMATDVAARGIDIPDVDLVIQIDPPTDPSVFLHRCGRTGRANKVGRAIVMLNNDTQEEDYVGFMEVKSVFMTKIDPPEDKDNHSFHNKFQKKLRKYMLEDRARHELAVKSYVGFVRYYSKHIASLIFRLASLDYIAIAKMYGLLRLPKMPESRYIENEKMPEDGWLGEVVDMDTYAYLDKSAEKARLENLEKDKLAKAENAKRRKELKVKNEAWSSKTEKRETKLERKEKMKRKREAIEKQLEAEQERGGLDEEEVKEDWKDLVRKNKKKQKSNGGGGGGGVLQGSFDDL.

Positions 10 to 38 (WENLRVDLEPWLKDAIRSLNYPTMTPVQA) match the Q motif motif. Positions 41 to 236 (IPLLSGNKDV…RTGMNNPVKL (196 aa)) constitute a Helicase ATP-binding domain. Residue 54-61 (AVTGSGKT) coordinates ATP. Positions 184–187 (DEAD) match the DEAD box motif. Positions 266 to 444 (KLTTMLQMLR…KFQKKLRKYM (179 aa)) constitute a Helicase C-terminal domain. The stretch at 528–597 (SAEKARLENL…QLEAEQERGG (70 aa)) forms a coiled coil. The interval 554–637 (LKVKNEAWSS…GVLQGSFDDL (84 aa)) is disordered. Composition is skewed to basic and acidic residues over residues 564-576 (KTEK…ERKE) and 583-598 (EAIE…RGGL). A compositionally biased stretch (gly residues) spans 621-630 (NGGGGGGGVL).

The protein belongs to the DEAD box helicase family. DDX55/SPB4 subfamily. In terms of assembly, component of pre-60S ribosomal complexes.

The protein resides in the nucleus. The protein localises to the nucleolus. It catalyses the reaction ATP + H2O = ADP + phosphate + H(+). ATP-binding RNA helicase involved in the biogenesis of 60S ribosomal subunits. Binds 90S pre-ribosomal particles and dissociates from pre-60S ribosomal particles after processing of 27SB pre-rRNA. Required for the normal formation of 18S rRNA through the processing of pre-rRNAs at sites A0, A1 and A2, and the normal formation of 25S and 5.8S rRNAs through the processing of pre-rRNAs at sites C1 and C2. The chain is ATP-dependent rRNA helicase SPB4 from Lodderomyces elongisporus (strain ATCC 11503 / CBS 2605 / JCM 1781 / NBRC 1676 / NRRL YB-4239) (Yeast).